The sequence spans 312 residues: Dipeptide transport ATP-binding protein DppF (312 aa).

An ABC transporter domain is found at 10 to 255; that stretch reads IKNLDLTFNK…PIHPYTKSLL (246 aa). Position 45–52 (45–52) interacts with ATP; that stretch reads GESGSGKT.

This sequence belongs to the ABC transporter superfamily. The complex is composed of two ATP-binding proteins (DppD and DppF), two transmembrane proteins (DppB and DppC) and a solute-binding protein (DppA).

It localises to the cell membrane. It catalyses the reaction a dipeptide(out) + ATP + H2O = a dipeptide(in) + ADP + phosphate + H(+). Part of the ABC transporter DppABCDF involved in dipeptide transport. Responsible for energy coupling to the transport system. This is Dipeptide transport ATP-binding protein DppF from Lactococcus lactis subsp. cremoris (strain MG1363).